Here is a 448-residue protein sequence, read N- to C-terminus: uncharacterized protein (448 aa).

Residues 4–155 (QAIVLATFDA…SAVNLEFDSL (152 aa)) enclose the uDENN domain. The region spanning 183-326 (LDHLGPAFYC…FKGLSRYLSF (144 aa)) is the cDENN domain. The dDENN domain maps to 328–428 (GESSWGLTTY…WQYGKYFWLR (101 aa)). The chain crosses the membrane as a helical span at residues 425–447 (FWLRRVSLIFLASTCFLFILWKL).

Its subcellular location is the golgi apparatus membrane. The protein localises to the endoplasmic reticulum membrane. This is an uncharacterized protein from Schizosaccharomyces pombe (strain 972 / ATCC 24843) (Fission yeast).